Reading from the N-terminus, the 249-residue chain is SRR1-like protein (249 aa).

Residues 1-40 (MAAAALEPWSAVAPRRRKRAAGRRPRPGEGPRAEPEADGE) form a disordered region. Basic residues predominate over residues 14–25 (PRRRKRAAGRRP). Over residues 26-40 (RPGEGPRAEPEADGE) the composition is skewed to basic and acidic residues.

This sequence belongs to the SRR1 family.

It is found in the cytoplasm. Plays a role in the regulation of heme biosynthesis and in the regulation of the expression of core clock genes. In Mus musculus (Mouse), this protein is SRR1-like protein (Srrd).